We begin with the raw amino-acid sequence, 191 residues long: Holliday junction branch migration complex subunit RuvA (191 aa).

The segment at 1–64 (MIGSITGNVE…DNITQLYGFL (64 aa)) is domain I. Residues 65 to 142 (NRQEQDYFKM…KMPIEETFSI (78 aa)) are domain II. Positions 143 to 146 (IEND) are flexible linker. A domain III region spans residues 146-191 (DDSLAALISLGYEKLKAFNVIQEIKSKTPDASTQEVIRKALQKLSQ).

The protein belongs to the RuvA family. In terms of assembly, homotetramer. Forms an RuvA(8)-RuvB(12)-Holliday junction (HJ) complex. HJ DNA is sandwiched between 2 RuvA tetramers; dsDNA enters through RuvA and exits via RuvB. An RuvB hexamer assembles on each DNA strand where it exits the tetramer. Each RuvB hexamer is contacted by two RuvA subunits (via domain III) on 2 adjacent RuvB subunits; this complex drives branch migration. In the full resolvosome a probable DNA-RuvA(4)-RuvB(12)-RuvC(2) complex forms which resolves the HJ.

Its subcellular location is the cytoplasm. The RuvA-RuvB-RuvC complex processes Holliday junction (HJ) DNA during genetic recombination and DNA repair, while the RuvA-RuvB complex plays an important role in the rescue of blocked DNA replication forks via replication fork reversal (RFR). RuvA specifically binds to HJ cruciform DNA, conferring on it an open structure. The RuvB hexamer acts as an ATP-dependent pump, pulling dsDNA into and through the RuvAB complex. HJ branch migration allows RuvC to scan DNA until it finds its consensus sequence, where it cleaves and resolves the cruciform DNA. The sequence is that of Holliday junction branch migration complex subunit RuvA from Ehrlichia ruminantium (strain Gardel).